An 89-amino-acid chain; its full sequence is CRISPR-associated endoribonuclease Cas2 2 (89 aa).

Aspartate 9 provides a ligand contact to Mg(2+).

Belongs to the CRISPR-associated endoribonuclease Cas2 protein family. Homodimer, forms a heterotetramer with a Cas1 homodimer. The cofactor is Mg(2+).

Functionally, CRISPR (clustered regularly interspaced short palindromic repeat), is an adaptive immune system that provides protection against mobile genetic elements (viruses, transposable elements and conjugative plasmids). CRISPR clusters contain sequences complementary to antecedent mobile elements and target invading nucleic acids. CRISPR clusters are transcribed and processed into CRISPR RNA (crRNA). Functions as a ssRNA-specific endoribonuclease. Involved in the integration of spacer DNA into the CRISPR cassette. The sequence is that of CRISPR-associated endoribonuclease Cas2 2 from Methanospirillum hungatei JF-1 (strain ATCC 27890 / DSM 864 / NBRC 100397 / JF-1).